A 224-amino-acid chain; its full sequence is 7-cyano-7-deazaguanine synthase (224 aa).

8–18 (VSGGADSATVL) serves as a coordination point for ATP. Zn(2+)-binding residues include Cys-189, Cys-199, Cys-202, and Cys-205.

Belongs to the QueC family. Zn(2+) is required as a cofactor.

The enzyme catalyses 7-carboxy-7-deazaguanine + NH4(+) + ATP = 7-cyano-7-deazaguanine + ADP + phosphate + H2O + H(+). It functions in the pathway purine metabolism; 7-cyano-7-deazaguanine biosynthesis. In terms of biological role, catalyzes the ATP-dependent conversion of 7-carboxy-7-deazaguanine (CDG) to 7-cyano-7-deazaguanine (preQ(0)). The protein is 7-cyano-7-deazaguanine synthase of Rickettsia felis (strain ATCC VR-1525 / URRWXCal2) (Rickettsia azadi).